A 646-amino-acid polypeptide reads, in one-letter code: Depudecin biosynthesis cluster-specific transcription activator DEP6 (646 aa).

The segment at residues 16-43 (CEICRERKVRCDRALPKCRRCDRLNQPC) is a DNA-binding region (zn(2)-C6 fungal-type). Disordered stretches follow at residues 76-130 (TTAA…SQSQ) and 345-366 (KSEH…LALP). Over residues 349 to 360 (SQGMQNRETQSG) the composition is skewed to polar residues.

It is found in the nucleus. Transcription factor that positively regulates the expression of the gene cluster that mediates the biosynthesis of depudecin, a highly oxidized eleven-carbon linear polyketide that acts as a histone deacetylase (HDAC) inhibitor and makes a small contribution to pathogenesis. The chain is Depudecin biosynthesis cluster-specific transcription activator DEP6 from Alternaria brassicicola (Dark leaf spot agent).